The chain runs to 406 residues: 3-phosphoshikimate 1-carboxyvinyltransferase (406 aa).

3-phosphoshikimate is bound by residues lysine 20, serine 21, and arginine 25. Lysine 20 contacts phosphoenolpyruvate. Phosphoenolpyruvate is bound by residues glycine 84 and arginine 112. Serine 155, serine 156, glutamine 157, aspartate 295, glutamine 317, and lysine 321 together coordinate 3-phosphoshikimate. Residue glutamine 157 participates in phosphoenolpyruvate binding. Aspartate 295 acts as the Proton acceptor in catalysis. Residues arginine 325, arginine 366, and lysine 392 each contribute to the phosphoenolpyruvate site.

It belongs to the EPSP synthase family. In terms of assembly, monomer.

It localises to the cytoplasm. The catalysed reaction is 3-phosphoshikimate + phosphoenolpyruvate = 5-O-(1-carboxyvinyl)-3-phosphoshikimate + phosphate. It participates in metabolic intermediate biosynthesis; chorismate biosynthesis. Catalyzes the transfer of the enolpyruvyl moiety of phosphoenolpyruvate (PEP) to the 5-hydroxyl of shikimate-3-phosphate (S3P) to produce enolpyruvyl shikimate-3-phosphate and inorganic phosphate. The polypeptide is 3-phosphoshikimate 1-carboxyvinyltransferase (Pyrococcus furiosus (strain ATCC 43587 / DSM 3638 / JCM 8422 / Vc1)).